The sequence spans 198 residues: HTH-type transcriptional regulator BetI (198 aa).

The HTH tetR-type domain occupies 8–68 (PLRRRELIDA…ATMRHLLREL (61 aa)). The H-T-H motif DNA-binding region spans 31 to 50 (TVAQIAHEAGVSPALAHHYF).

The protein operates within amine and polyamine biosynthesis; betaine biosynthesis via choline pathway [regulation]. Repressor involved in the biosynthesis of the osmoprotectant glycine betaine. It represses transcription of the choline transporter BetT and the genes of BetAB involved in the synthesis of glycine betaine. This is HTH-type transcriptional regulator BetI from Brucella canis (strain ATCC 23365 / NCTC 10854 / RM-666).